Here is a 1042-residue protein sequence, read N- to C-terminus: Starch synthase 3, chloroplastic/amyloplastic (1042 aa).

The N-terminal 44 residues, 1 to 44 (MISYFLNQDFSRKKQGRMAASGPKSSGPRGFGRRTTVGSAQKRT), are a transit peptide targeting the chloroplast. The interval 1–63 (MISYFLNQDF…NATSTATNEV (63 aa)) is disordered. The segment covering 54–63 (NATSTATNEV) has biased composition (polar residues). The stretch at 247 to 302 (ENFLLEEKLREQEKLAKEEAERERQKEEKRRIEAQKAAIEADRAQAKAETQKRREL) forms a coiled coil. Lys-608 contributes to the ADP-alpha-D-glucose binding site.

Belongs to the glycosyltransferase 1 family. Bacterial/plant glycogen synthase subfamily. Expressed in leaves and flowers.

The protein resides in the plastid. It is found in the chloroplast. It localises to the amyloplast. It catalyses the reaction [(1-&gt;4)-alpha-D-glucosyl](n) + ADP-alpha-D-glucose = [(1-&gt;4)-alpha-D-glucosyl](n+1) + ADP + H(+). Its pathway is glycan biosynthesis; starch biosynthesis. Involved in the synthesis of glycan chains within amylopectin in leaves. May play a regulatory role in the control of starch accumulation in plastids. The chain is Starch synthase 3, chloroplastic/amyloplastic (SS3) from Arabidopsis thaliana (Mouse-ear cress).